The primary structure comprises 193 residues: 5'RNA triphosphatase A449R (193 aa).

Mn(2+) serves as cofactor.

The catalysed reaction is a 5'-end triphospho-ribonucleoside in mRNA + H2O = a 5'-end diphospho-ribonucleoside in mRNA + phosphate + H(+). Catalyzes the first stes of cap formation: by removing the gamma-phosphate from the 5'-triphosphate end of nascent mRNA to yield a diphosphate end. In Chlorella (PBCV-1), this protein is 5'RNA triphosphatase A449R (A449R).